A 208-amino-acid chain; its full sequence is Thymidylate kinase (208 aa).

10–17 provides a ligand contact to ATP; the sequence is GPEGSGKT.

It belongs to the thymidylate kinase family.

It catalyses the reaction dTMP + ATP = dTDP + ADP. In terms of biological role, phosphorylation of dTMP to form dTDP in both de novo and salvage pathways of dTTP synthesis. The chain is Thymidylate kinase from Bacillus cereus (strain Q1).